A 145-amino-acid chain; its full sequence is Peptide methionine sulfoxide reductase MsrB (145 aa).

Residues 6–129 form the MsrB domain; that stretch reads EEELKQTLTD…NAAALRFVPV (124 aa). C118 serves as the catalytic Nucleophile.

Belongs to the MsrB Met sulfoxide reductase family.

It carries out the reaction L-methionyl-[protein] + [thioredoxin]-disulfide + H2O = L-methionyl-(R)-S-oxide-[protein] + [thioredoxin]-dithiol. This chain is Peptide methionine sulfoxide reductase MsrB, found in Enterococcus faecalis (strain ATCC 700802 / V583).